The primary structure comprises 1288 residues: Contactin-associated protein-like 3B (1288 aa).

A signal peptide spans 1–25 (MASVAWAVLKVLLLLPTQTWSPVGA). The segment at 23–61 (VGAGNPPDCDSPLASALPRSSFSSSSELSSSHGPGFSRL) is disordered. The Extracellular segment spans residues 26-1245 (GNPPDCDSPL…LVNADRRDSA (1220 aa)). Positions 31–177 (CDSPLASALP…IGMRIEVYGC (147 aa)) constitute an F5/8 type C domain. Cystine bridges form between C31-C177, C332-C364, C513-C545, C551-C562, C556-C571, and C573-C583. A compositionally biased stretch (low complexity) spans 33 to 59 (SPLASALPRSSFSSSSELSSSHGPGFS). Laminin G-like domains are found at residues 183-364 (VVYF…SFSC) and 370-545 (VPVT…IDSC). N-linked (GlcNAc...) asparagine glycosylation is present at N359. Residues 547–584 (ITDRCLPSYCEHGGECSQSWDTFSCDCLGTGYTGETCH) enclose the EGF-like 1 domain. A Fibrinogen C-terminal domain is found at 585-792 (SSLYEQSCEA…LLCRGDKSFW (208 aa)). The N-linked (GlcNAc...) asparagine glycan is linked to N706. The Laminin G-like 3 domain occupies 793 to 958 (NSASFNTETS…TVTPGVEPGC (166 aa)). Disulfide bonds link C931–C958, C962–C975, C969–C984, C986–C996, and C1167–C1203. The 39-residue stretch at 959–997 (AGHCSTYGHLCRNGGRCREKRRGVTCDCAFSAYDGPFCS) folds into the EGF-like 2 domain. The region spanning 1016 to 1203 (EHYTLSENSS…RGHVAPMARC (188 aa)) is the Laminin G-like 4 domain. The segment at 1215–1236 (ELAPRLAGGAGRSGPVDEGEPL) is disordered. Residues 1246–1266 (VIGGVIAVEIFILLCITAIAI) form a helical membrane-spanning segment. Residues 1267-1288 (RIYQQRKLRKENESKVSKKEEC) lie on the Cytoplasmic side of the membrane.

This sequence belongs to the neurexin family.

The protein localises to the membrane. This Homo sapiens (Human) protein is Contactin-associated protein-like 3B (CNTNAP3B).